The primary structure comprises 170 residues: Flavodoxin (170 aa).

The 162-residue stretch at 4 to 165 (IGLFYGTQTG…RIKTWVSQLK (162 aa)) folds into the Flavodoxin-like domain.

The protein belongs to the flavodoxin family. FMN serves as cofactor.

Low-potential electron donor to a number of redox enzymes. The sequence is that of Flavodoxin (isiB) from Synechococcus elongatus (strain ATCC 33912 / PCC 7942 / FACHB-805) (Anacystis nidulans R2).